The sequence spans 519 residues: Cilia- and flagella-associated protein 157 (519 aa).

Residues 1–11 are compositionally biased toward basic residues; the sequence is MPPKKKGKRGP. Residues 1–25 are disordered; it reads MPPKKKGKRGPSAKTKEKETVRVAS. Coiled-coil stretches lie at residues 28–185 and 241–356; these read VTEQ…EKKV and IELI…QRTL.

It belongs to the CFAP157 family.

The protein resides in the cytoplasm. It is found in the cytoskeleton. The protein localises to the cilium basal body. Its function is as follows. Specifically required during spermatogenesis for flagellum morphogenesis and sperm motility. This Xenopus tropicalis (Western clawed frog) protein is Cilia- and flagella-associated protein 157.